The primary structure comprises 291 residues: Serine hydrolase BPHL (291 aa).

The first 37 residues, 1–37, serve as a signal peptide directing secretion; the sequence is MVAVLGGRGVLRLRLLLSALKPGIHVPRAGPAAAFGT. In terms of domain architecture, AB hydrolase-1 spans 62–181; it reads AVLLLPGMLG…DSMIYEGIRD (120 aa). Residues Lys86 and Lys119 each carry the N6-acetyllysine modification. At Lys126 the chain carries N6-acetyllysine; alternate. Lys126 bears the N6-succinyllysine; alternate mark. Ser139 acts as the Nucleophile in catalysis. Residue Lys184 is modified to N6-succinyllysine. At Lys191 the chain carries N6-acetyllysine; alternate. Lys191 bears the N6-succinyllysine; alternate mark. Lys217 carries the N6-acetyllysine modification. Asp221 provides a ligand contact to Mg(2+). Lys243 is subject to N6-acetyllysine. The active-site Charge relay system is the Asp244. An N6-acetyllysine; alternate mark is found at Lys260 and Lys271. N6-succinyllysine; alternate is present on residues Lys260 and Lys271. The active-site Charge relay system is His272.

This sequence belongs to the AB hydrolase superfamily. Lipase family. In terms of assembly, monomer. May also form homodimers. Expressed at high levels in liver and kidney and lower levels in heart, intestine and skeletal muscle.

The protein localises to the mitochondrion. The enzyme catalyses L-homocysteine thiolactone + H2O = L-homocysteine + H(+). The catalysed reaction is valacyclovir + H2O = acyclovir + L-valine + H(+). In terms of biological role, specific alpha-amino acid ester serine hydrolase that prefers small, hydrophobic, and aromatic side chains and does not have a stringent requirement for the leaving group other than preferring a primary alcohol. Has homocysteine-thiolactonase activity (in vitro) and may play a significant role in the detoxification of homocysteine thiolactone in vivo. Catalyzes the hydrolytic activation of amino acid ester prodrugs of nucleoside analogs such as valacyclovir and valganciclovir, converting them into their active forms (acyclovir and ganciclovir). The protein is Serine hydrolase BPHL (BPHL) of Homo sapiens (Human).